The primary structure comprises 154 residues: Endoribonuclease YbeY (154 aa).

Residues H117, H121, and H127 each coordinate Zn(2+).

The protein belongs to the endoribonuclease YbeY family. Zn(2+) serves as cofactor.

The protein resides in the cytoplasm. In terms of biological role, single strand-specific metallo-endoribonuclease involved in late-stage 70S ribosome quality control and in maturation of the 3' terminus of the 16S rRNA. This Aromatoleum aromaticum (strain DSM 19018 / LMG 30748 / EbN1) (Azoarcus sp. (strain EbN1)) protein is Endoribonuclease YbeY.